The following is a 413-amino-acid chain: Gamma-glutamyl phosphate reductase (413 aa).

Belongs to the gamma-glutamyl phosphate reductase family.

Its subcellular location is the cytoplasm. The catalysed reaction is L-glutamate 5-semialdehyde + phosphate + NADP(+) = L-glutamyl 5-phosphate + NADPH + H(+). It participates in amino-acid biosynthesis; L-proline biosynthesis; L-glutamate 5-semialdehyde from L-glutamate: step 2/2. In terms of biological role, catalyzes the NADPH-dependent reduction of L-glutamate 5-phosphate into L-glutamate 5-semialdehyde and phosphate. The product spontaneously undergoes cyclization to form 1-pyrroline-5-carboxylate. In Salinispora tropica (strain ATCC BAA-916 / DSM 44818 / JCM 13857 / NBRC 105044 / CNB-440), this protein is Gamma-glutamyl phosphate reductase.